The sequence spans 107 residues: UPF0102 protein CTN_0433 (107 aa).

This sequence belongs to the UPF0102 family.

The protein is UPF0102 protein CTN_0433 of Thermotoga neapolitana (strain ATCC 49049 / DSM 4359 / NBRC 107923 / NS-E).